A 394-amino-acid chain; its full sequence is Protein-glutamate methylesterase/protein-glutamine glutaminase of group 2 operon (394 aa).

The 119-residue stretch at 21–139 (RVMVVDDSAV…ELTGADTFKR (119 aa)) folds into the Response regulatory domain. At D72 the chain carries 4-aspartylphosphate. A disordered region spans residues 148-201 (LGAAARRSGPRREGTAAARPPGAAAQPTSGYTLPSPVRAKPETGPLTVRPLPPD). A compositionally biased stretch (low complexity) spans 162–172 (TAAARPPGAAA). Positions 200–382 (PDGRPDVIAI…SAILPLKEIG (183 aa)) constitute a CheB-type methylesterase domain. Catalysis depends on residues S212, H238, and D334.

The protein belongs to the CheB family. In terms of processing, phosphorylated by CheA. Phosphorylation of the N-terminal regulatory domain activates the methylesterase activity.

The protein resides in the cytoplasm. It carries out the reaction [protein]-L-glutamate 5-O-methyl ester + H2O = L-glutamyl-[protein] + methanol + H(+). The enzyme catalyses L-glutaminyl-[protein] + H2O = L-glutamyl-[protein] + NH4(+). Involved in chemotaxis. Part of a chemotaxis signal transduction system that modulates chemotaxis in response to various stimuli. Catalyzes the demethylation of specific methylglutamate residues introduced into the chemoreceptors (methyl-accepting chemotaxis proteins or MCP) by CheR. Also mediates the irreversible deamidation of specific glutamine residues to glutamic acid. This is Protein-glutamate methylesterase/protein-glutamine glutaminase of group 2 operon from Rhodospirillum centenum (strain ATCC 51521 / SW).